Reading from the N-terminus, the 272-residue chain is Indole-3-glycerol phosphate synthase (272 aa).

This sequence belongs to the TrpC family.

It carries out the reaction 1-(2-carboxyphenylamino)-1-deoxy-D-ribulose 5-phosphate + H(+) = (1S,2R)-1-C-(indol-3-yl)glycerol 3-phosphate + CO2 + H2O. The protein operates within amino-acid biosynthesis; L-tryptophan biosynthesis; L-tryptophan from chorismate: step 4/5. This chain is Indole-3-glycerol phosphate synthase, found in Mycolicibacterium gilvum (strain PYR-GCK) (Mycobacterium gilvum (strain PYR-GCK)).